The chain runs to 759 residues: DNA topoisomerase 4 subunit A (759 aa).

Residues 44–516 enclose the Topo IIA-type catalytic domain; sequence LPDVRDGLKP…VFGEAPQVDA (473 aa). The active-site O-(5'-phospho-DNA)-tyrosine intermediate is the Y132.

This sequence belongs to the type II topoisomerase GyrA/ParC subunit family. ParC type 1 subfamily. Heterotetramer composed of ParC and ParE.

It localises to the cell membrane. The enzyme catalyses ATP-dependent breakage, passage and rejoining of double-stranded DNA.. Topoisomerase IV is essential for chromosome segregation. It relaxes supercoiled DNA. Performs the decatenation events required during the replication of a circular DNA molecule. In Caulobacter vibrioides (strain ATCC 19089 / CIP 103742 / CB 15) (Caulobacter crescentus), this protein is DNA topoisomerase 4 subunit A.